Reading from the N-terminus, the 435-residue chain is Deoxybrevianamide E synthase (435 aa).

The interval 1 to 28 (MTAPELRAPAGHPQEPPARSSPAQALSS) is disordered. Glu-96 lines the brevianamide F pocket. Arg-110, Lys-195, Tyr-197, Lys-265, Tyr-267, Tyr-354, Tyr-419, and Tyr-423 together coordinate dimethylallyl diphosphate.

This sequence belongs to the tryptophan dimethylallyltransferase family. In terms of assembly, monomer.

It carries out the reaction brevianamide F + dimethylallyl diphosphate = deoxybrevianamide E + diphosphate. It participates in alkaloid biosynthesis. In terms of biological role, deoxybrevianamide E synthase; part of the gene cluster that mediates the biosynthesis of notoamide, a fungal indole alkaloid that belongs to a family of natural products containing a characteristic bicyclo[2.2.2]diazaoctane core. The first step of notoamide biosynthesis involves coupling of L-proline and L-tryptophan by the bimodular NRPS notE', to produce cyclo-L-tryptophan-L-proline called brevianamide F. The reverse prenyltransferase notF' then acts as a deoxybrevianamide E synthase and converts brevianamide F to deoxybrevianamide E via reverse prenylation at C-2 of the indole ring leading to the bicyclo[2.2.2]diazaoctane core. Deoxybrevianamide E is further hydroxylated at C-6 of the indole ring, likely catalyzed by the cytochrome P450 monooxygenase notG', to yield 6-hydroxy-deoxybrevianamide E. 6-hydroxy-deoxybrevianamide E is a specific substrate of the prenyltransferase notC' for normal prenylation at C-7 to produce 6-hydroxy-7-prenyl-deoxybrevianamide, also called notoamide S. As the proposed pivotal branching point in notoamide biosynthesis, notoamide S can be diverted to notoamide E through an oxidative pyran ring closure putatively catalyzed by either notH' cytochrome P450 monooxygenase or the notD' FAD-linked oxidoreductase. This step would be followed by an indole 2,3-epoxidation-initiated pinacol-like rearrangement catalyzed by the notB' FAD-dependent monooxygenase leading to the formation of notoamide C and notoamide D. On the other hand notoamide S is converted to notoamide T by notH' (or notD'), a bifunctional oxidase that also functions as the intramolecular Diels-Alderase responsible for generation of (-)-notoamide T. To generate antipodal (+)-notoaminide T, notH (or notD) in Aspergillus strain MF297-2 is expected to catalyze a Diels-Alder reaction leading to the opposite stereochemistry. The remaining oxidoreductase notD' (or notH') likely catalyzes the oxidative pyran ring formation to yield (-)-stephacidin A. The FAD-dependent monooxygenase notI' is highly similar to notB' and is predicted to catalyze a similar conversion from (-)-stephacidin A to (+)-notoamide B via the 2,3-epoxidation of (-)-stephacidin A followed by a pinacol-type rearrangement. Finally, it remains unclear which enzyme could be responsible for the final hydroxylation steps leading to notoamide A and sclerotiamide. This Aspergillus versicolor protein is Deoxybrevianamide E synthase.